A 100-amino-acid polypeptide reads, in one-letter code: NADH-quinone oxidoreductase subunit K 2 (100 aa).

3 consecutive transmembrane segments (helical) span residues Leu-4–Val-24, Ile-29–Phe-49, and Ile-60–Met-80.

The protein belongs to the complex I subunit 4L family. As to quaternary structure, NDH-1 is composed of 14 different subunits. Subunits NuoA, H, J, K, L, M, N constitute the membrane sector of the complex.

The protein localises to the cell inner membrane. The enzyme catalyses a quinone + NADH + 5 H(+)(in) = a quinol + NAD(+) + 4 H(+)(out). Functionally, NDH-1 shuttles electrons from NADH, via FMN and iron-sulfur (Fe-S) centers, to quinones in the respiratory chain. The immediate electron acceptor for the enzyme in this species is believed to be ubiquinone. Couples the redox reaction to proton translocation (for every two electrons transferred, four hydrogen ions are translocated across the cytoplasmic membrane), and thus conserves the redox energy in a proton gradient. The protein is NADH-quinone oxidoreductase subunit K 2 of Geotalea uraniireducens (strain Rf4) (Geobacter uraniireducens).